Here is a 205-residue protein sequence, read N- to C-terminus: Holliday junction branch migration complex subunit RuvA (205 aa).

The tract at residues 1–64 (MIGKLKGVID…EDQIKLFGFR (64 aa)) is domain I. Residues 65-143 (TDHEREWFRL…SFANVDPTVV (79 aa)) form a domain II region. The interval 144–154 (HLAGDLDDQRA) is flexible linker. The tract at residues 154 to 205 (APRPVRDAISALVNLGYGQPQATAAIAAASRGAGENAETAQLIRLGLKELSK) is domain III.

Belongs to the RuvA family. In terms of assembly, homotetramer. Forms an RuvA(8)-RuvB(12)-Holliday junction (HJ) complex. HJ DNA is sandwiched between 2 RuvA tetramers; dsDNA enters through RuvA and exits via RuvB. An RuvB hexamer assembles on each DNA strand where it exits the tetramer. Each RuvB hexamer is contacted by two RuvA subunits (via domain III) on 2 adjacent RuvB subunits; this complex drives branch migration. In the full resolvosome a probable DNA-RuvA(4)-RuvB(12)-RuvC(2) complex forms which resolves the HJ.

It localises to the cytoplasm. Functionally, the RuvA-RuvB-RuvC complex processes Holliday junction (HJ) DNA during genetic recombination and DNA repair, while the RuvA-RuvB complex plays an important role in the rescue of blocked DNA replication forks via replication fork reversal (RFR). RuvA specifically binds to HJ cruciform DNA, conferring on it an open structure. The RuvB hexamer acts as an ATP-dependent pump, pulling dsDNA into and through the RuvAB complex. HJ branch migration allows RuvC to scan DNA until it finds its consensus sequence, where it cleaves and resolves the cruciform DNA. The chain is Holliday junction branch migration complex subunit RuvA from Nitrobacter winogradskyi (strain ATCC 25391 / DSM 10237 / CIP 104748 / NCIMB 11846 / Nb-255).